We begin with the raw amino-acid sequence, 520 residues long: Cyclin-L2 (520 aa).

At Ala2 the chain carries N-acetylalanine. 2 cyclin-like regions span residues 83–185 (ELIQ…RVLK) and 198–282 (KIIV…KILQ). The interval 316 to 520 (LPGGTQVLDG…DHPGHSRHRR (205 aa)) is disordered. Residues Ser330, Ser338, Ser348, and Ser351 each carry the phosphoserine modification. The span at 357–367 (RRLEGAKKAKA) shows a compositional bias: basic and acidic residues. The residue at position 369 (Ser369) is a Phosphoserine. Over residues 376–390 (KGRESRSRSRSREQS) the composition is skewed to basic and acidic residues. Residues 385–423 (RSREQSYSRSPSRSASPKRRKSDSGSTSGGSKSQSRSRS) form an RS region. A compositionally biased stretch (low complexity) spans 408-436 (SGSTSGGSKSQSRSRSRSDSPPRQAPRSA). Residues 441-454 (SEIRGSRKSKDCKY) show a composition bias toward basic and acidic residues. The segment covering 456–471 (QKPHKSRSRSSSRSRS) has biased composition (basic residues). 2 stretches are compositionally biased toward basic and acidic residues: residues 472 to 481 (RSRERADNPG) and 489 to 514 (YYRD…DHPG).

Belongs to the cyclin family. Cyclin L subfamily. As to quaternary structure, interacts with CDK11A, CDK11B, CDK12, CDK13 and POLR2A, the hyperphosphorylated C-terminal domain (CTD) of RNA polymerase II. May form a ternary complex with CDK11B and casein kinase II (CKII). Interacts with pre-mRNA-splicing factors, including at least SRSF1, SRSF2 AND SRSF7/SLU7. As to expression, widely expressed.

Its subcellular location is the nucleus speckle. The protein resides in the nucleus. It is found in the nucleoplasm. Its function is as follows. Involved in pre-mRNA splicing. May induce cell death, possibly by acting on the transcription and RNA processing of apoptosis-related factors. The chain is Cyclin-L2 (CCNL2) from Homo sapiens (Human).